Reading from the N-terminus, the 316-residue chain is N-acetylmuramic acid 6-phosphate etherase (316 aa).

Residues 68–231 (ITDRLRSGGR…STCAMVRLGK (164 aa)) enclose the SIS domain. Glu-96 serves as the catalytic Proton donor. Glu-127 is an active-site residue.

This sequence belongs to the GCKR-like family. MurNAc-6-P etherase subfamily. Homodimer.

It carries out the reaction N-acetyl-D-muramate 6-phosphate + H2O = N-acetyl-D-glucosamine 6-phosphate + (R)-lactate. It participates in amino-sugar metabolism; N-acetylmuramate degradation. Functionally, specifically catalyzes the cleavage of the D-lactyl ether substituent of MurNAc 6-phosphate, producing GlcNAc 6-phosphate and D-lactate. This Prochlorococcus marinus (strain MIT 9303) protein is N-acetylmuramic acid 6-phosphate etherase.